Here is a 344-residue protein sequence, read N- to C-terminus: Tetraacyldisaccharide 4'-kinase (344 aa).

68–75 (TAGGNGKT) contacts ATP.

Belongs to the LpxK family.

It carries out the reaction a lipid A disaccharide + ATP = a lipid IVA + ADP + H(+). It functions in the pathway glycolipid biosynthesis; lipid IV(A) biosynthesis; lipid IV(A) from (3R)-3-hydroxytetradecanoyl-[acyl-carrier-protein] and UDP-N-acetyl-alpha-D-glucosamine: step 6/6. Transfers the gamma-phosphate of ATP to the 4'-position of a tetraacyldisaccharide 1-phosphate intermediate (termed DS-1-P) to form tetraacyldisaccharide 1,4'-bis-phosphate (lipid IVA). This is Tetraacyldisaccharide 4'-kinase from Photobacterium profundum (strain SS9).